The chain runs to 419 residues: E3 ubiquitin-protein ligase RNFT1 (419 aa).

The disordered stretch occupies residues 1 to 120 (MKLRAQFDRG…SGESDLESGE (120 aa)). Composition is skewed to polar residues over residues 31–44 (EPSS…SLTL) and 72–82 (GSSSGSTNGRG). Over residues 84–102 (TSRRMRTASHSHSHTHGHG) the composition is skewed to basic residues. 6 consecutive transmembrane segments (helical) span residues 141 to 161 (FIVI…AVAV), 187 to 207 (LHCA…FYTF), 217 to 237 (FFAN…SVGV), 240 to 260 (FILK…PCPL), 270 to 290 (YMLI…PLWF), and 303 to 323 (VGLT…LLAL). A required for ubiquitin ligase activity and for protection against ER stress-induced cell death region spans residues 352–403 (IREAGDICPICQADFKQPRVLVCQHIFCEECIAQWLNQERTCPLCRTVITDK). An RING-type zinc finger spans residues 359–397 (CPICQADFKQPRVLVCQHIFCEECIAQWLNQERTCPLCR).

The protein resides in the endoplasmic reticulum membrane. It carries out the reaction S-ubiquitinyl-[E2 ubiquitin-conjugating enzyme]-L-cysteine + [acceptor protein]-L-lysine = [E2 ubiquitin-conjugating enzyme]-L-cysteine + N(6)-ubiquitinyl-[acceptor protein]-L-lysine.. The protein operates within protein modification; protein ubiquitination. In terms of biological role, E3 ubiquitin-protein ligase that acts in the endoplasmic reticulum (ER)-associated degradation (ERAD) pathway, which targets misfolded proteins that accumulate in the endoplasmic reticulum (ER) for ubiquitination and subsequent proteasome-mediated degradation. Protects cells from ER stress-induced apoptosis. This chain is E3 ubiquitin-protein ligase RNFT1 (rnft1), found in Danio rerio (Zebrafish).